A 119-amino-acid polypeptide reads, in one-letter code: Large ribosomal subunit protein bL20 (119 aa).

This sequence belongs to the bacterial ribosomal protein bL20 family.

Functionally, binds directly to 23S ribosomal RNA and is necessary for the in vitro assembly process of the 50S ribosomal subunit. It is not involved in the protein synthesizing functions of that subunit. This Brevibacillus brevis (strain 47 / JCM 6285 / NBRC 100599) protein is Large ribosomal subunit protein bL20.